The sequence spans 419 residues: E3 ubiquitin-protein ligase RNF130 (419 aa).

Residues 1–27 form the signal peptide; sequence MSGAARAGPARLAALALLTCSLWPTRA. Topologically, residues 28–194 are extracellular; sequence DNASQEYYTA…MPPKNFSRGS (167 aa). Residues asparagine 29, asparagine 40, asparagine 112, asparagine 135, asparagine 172, and asparagine 189 are each glycosylated (N-linked (GlcNAc...) asparagine). In terms of domain architecture, PA spans 105–176; the sequence is IALLQRGNCT…SYLEKNISVQ (72 aa). Residues 195–217 traverse the membrane as a helical segment; that stretch reads LVFVSISFIVLMIISSAWLIFYF. The Cytoplasmic segment spans residues 218 to 419; that stretch reads IQKIRYTNAR…SLNANEVEWF (202 aa). The RING-type zinc finger occupies 264–305; that stretch reads CAVCIESYKQNDVVRVLPCKHVFHKSCVDPWLSEHCTCPMCK. Phosphoserine is present on serine 341.

As to expression, in testis sections, expressed in interstitial tissue and seminiferous tubules. In tubules, expression is mainly in postmeiotic germ cells and to a much lesser extent in Sertoli cells (at protein level). Expressed at high levels in liver, lung, stomach, heart and thymus.

The protein localises to the membrane. The protein resides in the cytoplasm. It carries out the reaction S-ubiquitinyl-[E2 ubiquitin-conjugating enzyme]-L-cysteine + [acceptor protein]-L-lysine = [E2 ubiquitin-conjugating enzyme]-L-cysteine + N(6)-ubiquitinyl-[acceptor protein]-L-lysine.. Its pathway is protein modification; protein ubiquitination. Functionally, acts as an E3 ubiquitin-protein ligase. May have a role during the programmed cell death of hematopoietic cells. This is E3 ubiquitin-protein ligase RNF130 from Rattus norvegicus (Rat).